The primary structure comprises 371 residues: Cytochrome b (371 aa).

A run of 4 helical transmembrane segments spans residues 25-45, 69-90, 105-125, and 170-190; these read FGSM…FLAV, WMMQ…YIHI, WMSG…GYVL, and FFAL…LHII. Heme b-binding residues include His75 and His89. Heme b is bound by residues His174 and His188. A ubiquinone is bound at residue His193. Transmembrane regions (helical) follow at residues 218 to 238, 280 to 300, 312 to 332, and 339 to 358; these read HKDL…VSFF, LGGA…PFTH, FSQL…WAAT, and FIVI…LLIP.

The protein belongs to the cytochrome b family. In terms of assembly, the cytochrome bc1 complex contains 3 respiratory subunits (MT-CYB, CYC1 and UQCRFS1), 2 core proteins (UQCRC1 and UQCRC2) and probably 6 low-molecular weight proteins. The cofactor is heme b.

Its subcellular location is the mitochondrion inner membrane. Component of the ubiquinol-cytochrome c reductase complex (complex III or cytochrome b-c1 complex) that is part of the mitochondrial respiratory chain. The b-c1 complex mediates electron transfer from ubiquinol to cytochrome c. Contributes to the generation of a proton gradient across the mitochondrial membrane that is then used for ATP synthesis. The polypeptide is Cytochrome b (MT-CYB) (Leiopython albertisii (Northern white-lipped python)).